We begin with the raw amino-acid sequence, 64 residues long: Small ribosomal subunit protein bS21 (64 aa).

The protein belongs to the bacterial ribosomal protein bS21 family.

This Flavobacterium johnsoniae (strain ATCC 17061 / DSM 2064 / JCM 8514 / BCRC 14874 / CCUG 350202 / NBRC 14942 / NCIMB 11054 / UW101) (Cytophaga johnsonae) protein is Small ribosomal subunit protein bS21.